Reading from the N-terminus, the 199-residue chain is METRALSVNLREVKKNGAAKLRRLGQVPAVVYHKGEATVAISVEEISLNKLVHSSESHMIDLQYPDGKSVRSFIKDVQFDPVTDRVIHADFQLFSTDEVVEMEVPIHLEGECPGVKIGGGKIQINVHTLPLKGKPEAMPEHFTIDVSALELGQTLHIRDLQAIAPEGVQILGDADTSVVSVVAPRKEAETAAEGATAEA.

This sequence belongs to the bacterial ribosomal protein bL25 family. CTC subfamily. As to quaternary structure, part of the 50S ribosomal subunit; part of the 5S rRNA/L5/L18/L25 subcomplex. Contacts the 5S rRNA. Binds to the 5S rRNA independently of L5 and L18.

Functionally, this is one of the proteins that binds to the 5S RNA in the ribosome where it forms part of the central protuberance. The sequence is that of Large ribosomal subunit protein bL25 from Chlorobaculum tepidum (strain ATCC 49652 / DSM 12025 / NBRC 103806 / TLS) (Chlorobium tepidum).